We begin with the raw amino-acid sequence, 152 residues long: MADSERLSAPGCWAACTTFSRTRKGILLLAEIILCLVILICFSAGTSGYSSLSVVEMVLAIVFFVIYMCDLHTRAPFINWPWSDFFRTLIAAILYLITSIFVLVERGNHSKIAAGVLGLLATCLFGYDAYFTFPLRQQRHTAAPTDPTDGPV.

The region spanning 19–137 is the MARVEL domain; the sequence is FSRTRKGILL…DAYFTFPLRQ (119 aa). A run of 3 helical transmembrane segments spans residues 25–45, 48–68, and 85–105; these read GILL…FSAG, GYSS…VIYM, and FFRT…VLVE. Residue Asn-108 is glycosylated (N-linked (GlcNAc...) asparagine). The chain crosses the membrane as a helical span at residues 112–132; the sequence is IAAGVLGLLATCLFGYDAYFT.

The protein localises to the membrane. May play a role in cell differentiation in the intestinal epithelium. The sequence is that of Proteolipid protein 2 (PLP2) from Oryctolagus cuniculus (Rabbit).